The chain runs to 93 residues: Alpha-defensin 16 (93 aa).

The N-terminal stretch at 1–19 is a signal peptide; it reads MKTLILLSALVLLAFQVQA. Residues 20–58 constitute a propeptide that is removed on maturation; it reads DPIQNTDEETKTEEQPGEEDQAVSVSFGDPEGTSLQEES. The interval 22 to 54 is disordered; it reads IQNTDEETKTEEQPGEEDQAVSVSFGDPEGTSL. Disulfide bonds link Cys64-Cys92, Cys66-Cys81, and Cys71-Cys91.

It belongs to the alpha-defensin family. Paneth cells of the small bowel.

It is found in the secreted. Probably contributes to the antimicrobial barrier function of the small bowel mucosa. In Mus musculus (Mouse), this protein is Alpha-defensin 16 (Defa16).